Here is a 381-residue protein sequence, read N- to C-terminus: Sensor histidine kinase FlgS (381 aa).

A Histidine kinase domain is found at 177–381 (HLAHEIRNPV…TFEIKILNAS (205 aa)). The residue at position 180 (His-180) is a Phosphohistidine; by autocatalysis.

In terms of assembly, interacts (via its C-terminal kinase domain) with FlhA (via N-terminus). Autophosphorylated.

The enzyme catalyses ATP + protein L-histidine = ADP + protein N-phospho-L-histidine.. In terms of biological role, member of the two-component regulatory system FlgR/FlgS that induces the transcriptional induction of the genes needed in motility and flagellar biogenesis. Also plays an essential role in bacterial survival at pH 2.5 independently of FlgR. Functions as a sensor protein kinase which is autophosphorylated at a histidine residue and transfers its phosphate group to the conserved aspartic acid residue in the regulatory domain of FlgR. In turn, FlgR functions as a transcriptional regulator initiating transcription from RpoN-dependent promoters. This Helicobacter pylori (strain ATCC 700392 / 26695) (Campylobacter pylori) protein is Sensor histidine kinase FlgS (flgS).